The following is a 739-amino-acid chain: Phosphoribosylformylglycinamidine synthase subunit PurL (739 aa).

Residue H52 is part of the active site. ATP contacts are provided by Y55 and K94. Mg(2+) is bound at residue E96. Residues 97–100 (SHNH) and R119 each bind substrate. The active-site Proton acceptor is the H98. D120 provides a ligand contact to Mg(2+). Residue Q243 coordinates substrate. Position 273 (D273) interacts with Mg(2+). Residue 317–319 (ESQ) coordinates substrate. Positions 500 and 537 each coordinate ATP. A Mg(2+)-binding site is contributed by N538. Residue S540 coordinates substrate.

This sequence belongs to the FGAMS family. In terms of assembly, monomer. Part of the FGAM synthase complex composed of 1 PurL, 1 PurQ and 2 PurS subunits.

It is found in the cytoplasm. It catalyses the reaction N(2)-formyl-N(1)-(5-phospho-beta-D-ribosyl)glycinamide + L-glutamine + ATP + H2O = 2-formamido-N(1)-(5-O-phospho-beta-D-ribosyl)acetamidine + L-glutamate + ADP + phosphate + H(+). Its pathway is purine metabolism; IMP biosynthesis via de novo pathway; 5-amino-1-(5-phospho-D-ribosyl)imidazole from N(2)-formyl-N(1)-(5-phospho-D-ribosyl)glycinamide: step 1/2. Part of the phosphoribosylformylglycinamidine synthase complex involved in the purines biosynthetic pathway. Catalyzes the ATP-dependent conversion of formylglycinamide ribonucleotide (FGAR) and glutamine to yield formylglycinamidine ribonucleotide (FGAM) and glutamate. The FGAM synthase complex is composed of three subunits. PurQ produces an ammonia molecule by converting glutamine to glutamate. PurL transfers the ammonia molecule to FGAR to form FGAM in an ATP-dependent manner. PurS interacts with PurQ and PurL and is thought to assist in the transfer of the ammonia molecule from PurQ to PurL. The chain is Phosphoribosylformylglycinamidine synthase subunit PurL from Enterococcus faecalis (strain ATCC 700802 / V583).